Here is a 346-residue protein sequence, read N- to C-terminus: Tryptophan--tRNA ligase (346 aa).

ATP is bound by residues 10–12 (QAS) and 18–19 (GN). The 'HIGH' region signature appears at 11–19 (ASGKQHLGN). Asp-140 contacts L-tryptophan. ATP-binding positions include 152-154 (GND), Ile-191, and 200-204 (KMSKS). The 'KMSKS' region motif lies at 200 to 204 (KMSKS).

It belongs to the class-I aminoacyl-tRNA synthetase family. As to quaternary structure, homodimer.

Its subcellular location is the cytoplasm. It catalyses the reaction tRNA(Trp) + L-tryptophan + ATP = L-tryptophyl-tRNA(Trp) + AMP + diphosphate + H(+). Catalyzes the attachment of tryptophan to tRNA(Trp). This is Tryptophan--tRNA ligase from Mycoplasma pneumoniae (strain ATCC 29342 / M129 / Subtype 1) (Mycoplasmoides pneumoniae).